Consider the following 228-residue polypeptide: UPF0173 metal-dependent hydrolase ABC2731 (228 aa).

Belongs to the UPF0173 family.

This is UPF0173 metal-dependent hydrolase ABC2731 from Shouchella clausii (strain KSM-K16) (Alkalihalobacillus clausii).